Reading from the N-terminus, the 430-residue chain is Tol-Pal system protein TolB (430 aa).

The N-terminal stretch at 1–21 (MKQALRVAFGFLMLWAAVLHA) is a signal peptide.

This sequence belongs to the TolB family. The Tol-Pal system is composed of five core proteins: the inner membrane proteins TolA, TolQ and TolR, the periplasmic protein TolB and the outer membrane protein Pal. They form a network linking the inner and outer membranes and the peptidoglycan layer.

The protein localises to the periplasm. Its function is as follows. Part of the Tol-Pal system, which plays a role in outer membrane invagination during cell division and is important for maintaining outer membrane integrity. TolB occupies a key intermediary position in the Tol-Pal system because it communicates directly with both membrane-embedded components, Pal in the outer membrane and TolA in the inner membrane. The polypeptide is Tol-Pal system protein TolB (Salmonella typhi).